The chain runs to 383 residues: Insulinoma-associated protein 1a (383 aa).

An SNAG domain region spans residues 1–20 (MPRGFLVKRNKKATPVSYRV). 2 disordered regions span residues 99–141 (PVDL…AMRK) and 229–269 (RWHK…SEDG). A compositionally biased stretch (polar residues) spans 105 to 120 (GTSNSNRTGTTVTTKR). The span at 130–140 (KPASKKAKAMR) shows a compositional bias: basic residues. Residues 209 to 231 (YRCPECDKLFSCPANLASHRRWH) form a C2H2-type 1 zinc finger. The span at 244-256 (APEKEETSSDRDT) shows a compositional bias: basic and acidic residues. The segment at 271–295 (YDCQHCGKKFKRQAYLKKHVTAHHD) adopts a C2H2-type 2; degenerate zinc-finger fold. C2H2-type zinc fingers lie at residues 314-337 (HLCP…RLQH) and 342-365 (YPCK…NKCH).

Belongs to the INSM1 family.

It is found in the nucleus. Functionally, may act as a transcriptional regulator. May play a role in neurogenesis and neuroendocrine cell differentiation during embryonic development. In Danio rerio (Zebrafish), this protein is Insulinoma-associated protein 1a (insm1a).